The chain runs to 352 residues: Protein RecA (352 aa).

Residue 65–72 (GPESSGKT) coordinates ATP.

The protein belongs to the RecA family.

Its subcellular location is the cytoplasm. Can catalyze the hydrolysis of ATP in the presence of single-stranded DNA, the ATP-dependent uptake of single-stranded DNA by duplex DNA, and the ATP-dependent hybridization of homologous single-stranded DNAs. It interacts with LexA causing its activation and leading to its autocatalytic cleavage. In Pseudomonas fluorescens (strain SBW25), this protein is Protein RecA.